The following is a 27-amino-acid chain: Delta-actitoxin-Avd2a (27 aa).

Disulfide bonds link Cys3/Cys17, Cys4/Cys11, and Cys6/Cys22.

This sequence belongs to the sea anemone short toxin (type III) family.

The protein localises to the secreted. It localises to the nematocyst. Specific arthropod (crab and insect) toxin that inhibits inactivation of voltage-gated sodium channels. It competes well with the site-3 toxin LqhalphaIT (from the scorpion L.quinquestriatus (AC P17728)) on binding to cockroach neuronal membranes (Ki=21.4 nM), and inhibits the inactivation of D.melanogaster channel (DmNav1), but not that of mammalian Navs expressed in Xenopus oocytes. Its activity is synergically enhanced by ligands of receptor site-4 (Bj-xtrIT (AC P56637)). Its ability to inhibit the channel mutant DmNav1[D1701R] only decreases 5-fold, whereas the inhibition activity is completely lost by LqhalphaIT and Av2 when tested on DmNav1[D1701R]. In Anemonia sulcata (Mediterranean snakelocks sea anemone), this protein is Delta-actitoxin-Avd2a.